The following is a 311-amino-acid chain: tRNA-cytidine(32) 2-sulfurtransferase (311 aa).

The PP-loop motif motif lies at 47–52 (SGGKDS). [4Fe-4S] cluster is bound by residues Cys-122, Cys-125, and Cys-213.

It belongs to the TtcA family. As to quaternary structure, homodimer. The cofactor is Mg(2+). [4Fe-4S] cluster is required as a cofactor.

It localises to the cytoplasm. It catalyses the reaction cytidine(32) in tRNA + S-sulfanyl-L-cysteinyl-[cysteine desulfurase] + AH2 + ATP = 2-thiocytidine(32) in tRNA + L-cysteinyl-[cysteine desulfurase] + A + AMP + diphosphate + H(+). It participates in tRNA modification. Catalyzes the ATP-dependent 2-thiolation of cytidine in position 32 of tRNA, to form 2-thiocytidine (s(2)C32). The sulfur atoms are provided by the cysteine/cysteine desulfurase (IscS) system. This chain is tRNA-cytidine(32) 2-sulfurtransferase, found in Pectobacterium atrosepticum (strain SCRI 1043 / ATCC BAA-672) (Erwinia carotovora subsp. atroseptica).